The primary structure comprises 465 residues: 3-isopropylmalate dehydratase large subunit (465 aa).

Residues Cys347, Cys407, and Cys410 each contribute to the [4Fe-4S] cluster site. Positions 416–443 (DTLRPGERSASTSNRNFEGRQGPGGRTH) are disordered.

This sequence belongs to the aconitase/IPM isomerase family. LeuC type 1 subfamily. Heterodimer of LeuC and LeuD. [4Fe-4S] cluster is required as a cofactor.

It carries out the reaction (2R,3S)-3-isopropylmalate = (2S)-2-isopropylmalate. It participates in amino-acid biosynthesis; L-leucine biosynthesis; L-leucine from 3-methyl-2-oxobutanoate: step 2/4. Its function is as follows. Catalyzes the isomerization between 2-isopropylmalate and 3-isopropylmalate, via the formation of 2-isopropylmaleate. This chain is 3-isopropylmalate dehydratase large subunit, found in Frankia casuarinae (strain DSM 45818 / CECT 9043 / HFP020203 / CcI3).